The chain runs to 115 residues: NADH-ubiquinone oxidoreductase chain 3 (115 aa).

A run of 3 helical transmembrane segments spans residues 4-24 (LMVMLVNITLSSCLIMIAFWL), 55-75 (FFLVAITFFLFDLEIALLLPL), and 87-107 (MMLTAFILVSVLALGLAYEWM).

The protein belongs to the complex I subunit 3 family. In terms of assembly, core subunit of respiratory chain NADH dehydrogenase (Complex I) which is composed of 45 different subunits. Interacts with TMEM186. Interacts with TMEM242.

The protein localises to the mitochondrion inner membrane. The enzyme catalyses a ubiquinone + NADH + 5 H(+)(in) = a ubiquinol + NAD(+) + 4 H(+)(out). In terms of biological role, core subunit of the mitochondrial membrane respiratory chain NADH dehydrogenase (Complex I) which catalyzes electron transfer from NADH through the respiratory chain, using ubiquinone as an electron acceptor. Essential for the catalytic activity of complex I. The chain is NADH-ubiquinone oxidoreductase chain 3 from Peromyscus mexicanus (Mexican deer mouse).